The sequence spans 173 residues: Large ribosomal subunit protein uL16 (173 aa).

This sequence belongs to the universal ribosomal protein uL16 family.

This chain is Large ribosomal subunit protein uL16, found in Methanosarcina mazei (strain ATCC BAA-159 / DSM 3647 / Goe1 / Go1 / JCM 11833 / OCM 88) (Methanosarcina frisia).